A 213-amino-acid polypeptide reads, in one-letter code: Kynurenine formamidase (213 aa).

Trp20 is a substrate binding site. Zn(2+) contacts are provided by His50, His54, and Asp56. Catalysis depends on His60, which acts as the Proton donor/acceptor. Residues His161 and Glu173 each coordinate Zn(2+).

The protein belongs to the Cyclase 1 superfamily. KynB family. In terms of assembly, homodimer. It depends on Zn(2+) as a cofactor.

The enzyme catalyses N-formyl-L-kynurenine + H2O = L-kynurenine + formate + H(+). Its pathway is amino-acid degradation; L-tryptophan degradation via kynurenine pathway; L-kynurenine from L-tryptophan: step 2/2. In terms of biological role, catalyzes the hydrolysis of N-formyl-L-kynurenine to L-kynurenine, the second step in the kynurenine pathway of tryptophan degradation. This is Kynurenine formamidase from Pseudomonas aeruginosa (strain UCBPP-PA14).